Here is a 369-residue protein sequence, read N- to C-terminus: Anhydro-N-acetylmuramic acid kinase (369 aa).

12-19 (GTSMDGVD) lines the ATP pocket.

This sequence belongs to the anhydro-N-acetylmuramic acid kinase family.

The catalysed reaction is 1,6-anhydro-N-acetyl-beta-muramate + ATP + H2O = N-acetyl-D-muramate 6-phosphate + ADP + H(+). Its pathway is amino-sugar metabolism; 1,6-anhydro-N-acetylmuramate degradation. The protein operates within cell wall biogenesis; peptidoglycan recycling. Catalyzes the specific phosphorylation of 1,6-anhydro-N-acetylmuramic acid (anhMurNAc) with the simultaneous cleavage of the 1,6-anhydro ring, generating MurNAc-6-P. Is required for the utilization of anhMurNAc either imported from the medium or derived from its own cell wall murein, and thus plays a role in cell wall recycling. This is Anhydro-N-acetylmuramic acid kinase from Shewanella oneidensis (strain ATCC 700550 / JCM 31522 / CIP 106686 / LMG 19005 / NCIMB 14063 / MR-1).